A 321-amino-acid polypeptide reads, in one-letter code: Anther-specific protein TA-29 (321 aa).

The segment at 301–321 (RSDEEEAHHQSKQHKDEDIIN) is disordered.

In terms of tissue distribution, anther specific (tapetal cells).

The protein is Anther-specific protein TA-29 (TA-29) of Nicotiana tabacum (Common tobacco).